The sequence spans 487 residues: L-tartrate/succinate antiporter (487 aa).

The next 14 helical transmembrane spans lie at 10–30, 33–53, 54–74, 93–113, 137–157, 189–209, 236–256, 292–312, 313–333, 340–360, 370–390, 393–413, 418–438, and 465–485; these read YLAPLAVIAIIALIPVPAGLE, TWLYFAVFTGVIVGLILEPVP, GAVVAMVGISIIAILSPWLLF, WAVSGFSNSVIWLIFAAFMFG, TLFLGYAVMFSELILAPVTPS, IGSYIMWMGIVADCVTSAIFL, FLGMLPLSILLVLLVPWLAYV, LMVGALVLWIFGGDYIDAAMV, GYSVVALMLLLRIISWDDIVS, VFFWLASLITLATGLNNTGFI, SLSGYSPTIVMVALIVVFYLL, FFASATAYTSALAPMMIAAAL, IPLPVFCLMVGAAIGLGSILT, and IFGLIFLVLLVITGLLWMPVV.

This sequence belongs to the SLC13A/DASS transporter (TC 2.A.47) family. DIT1 subfamily.

Its subcellular location is the cell inner membrane. It carries out the reaction (2R,3R)-tartrate(out) + succinate(in) = (2R,3R)-tartrate(in) + succinate(out). Its function is as follows. Catalyzes the uptake of tartrate in exchange for intracellular succinate. Essential for anaerobic L-tartrate fermentation. This is L-tartrate/succinate antiporter (ttdT) from Escherichia coli O6:K15:H31 (strain 536 / UPEC).